The chain runs to 639 residues: Threonine--tRNA ligase (639 aa).

Residues 1 to 61 (MINITLKDGK…KEDSELEILT (61 aa)) form the TGS domain. The catalytic stretch occupies residues 242 to 532 (DHRKLGKELD…LIEHFAGAFP (291 aa)). Positions 333, 384, and 509 each coordinate Zn(2+).

It belongs to the class-II aminoacyl-tRNA synthetase family. As to quaternary structure, homodimer. Zn(2+) serves as cofactor.

Its subcellular location is the cytoplasm. The catalysed reaction is tRNA(Thr) + L-threonine + ATP = L-threonyl-tRNA(Thr) + AMP + diphosphate + H(+). In terms of biological role, catalyzes the attachment of threonine to tRNA(Thr) in a two-step reaction: L-threonine is first activated by ATP to form Thr-AMP and then transferred to the acceptor end of tRNA(Thr). Also edits incorrectly charged L-seryl-tRNA(Thr). The chain is Threonine--tRNA ligase from Clostridium tetani (strain Massachusetts / E88).